Consider the following 128-residue polypeptide: Probable 4-amino-4-deoxy-L-arabinose-phosphoundecaprenol flippase subunit ArnF (128 aa).

Residues 1–21 traverse the membrane as a helical segment; it reads MGLMWGLFSVIIASAAQLSLG. Topologically, residues 22–35 are periplasmic; sequence YAASHLPPMTQFWD. The chain crosses the membrane as a helical span at residues 36 to 56; the sequence is FIAAFFAFGPGARMLVVGLVG. Over 57 to 76 the chain is Cytoplasmic; it reads YLLSVFCWYKALHQLALSKA. A helical transmembrane segment spans residues 77-97; sequence YALLSMSYVLVWIASMVLPGW. Residues 98-100 lie on the Periplasmic side of the membrane; sequence EGT. Residues 101-121 form a helical membrane-spanning segment; sequence FSLKALLGVACIMSGLMLIFL. Over 122-128 the chain is Cytoplasmic; sequence PTTKQRY.

The protein belongs to the ArnF family. As to quaternary structure, heterodimer of ArnE and ArnF.

It localises to the cell inner membrane. It functions in the pathway bacterial outer membrane biogenesis; lipopolysaccharide biosynthesis. Translocates 4-amino-4-deoxy-L-arabinose-phosphoundecaprenol (alpha-L-Ara4N-phosphoundecaprenol) from the cytoplasmic to the periplasmic side of the inner membrane. In Escherichia fergusonii (strain ATCC 35469 / DSM 13698 / CCUG 18766 / IAM 14443 / JCM 21226 / LMG 7866 / NBRC 102419 / NCTC 12128 / CDC 0568-73), this protein is Probable 4-amino-4-deoxy-L-arabinose-phosphoundecaprenol flippase subunit ArnF.